A 210-amino-acid polypeptide reads, in one-letter code: Somatotropin (210 aa).

The N-terminal stretch at 1 to 23 (MARALVLLSVVLVSLLVNQGTAS) is a signal peptide. Histidine 38 provides a ligand contact to Zn(2+). Cysteine 71 and cysteine 183 are disulfide-bonded. Glutamate 192 contacts Zn(2+). A disulfide bridge links cysteine 200 with cysteine 208.

This sequence belongs to the somatotropin/prolactin family.

It is found in the secreted. In terms of biological role, growth hormone plays an important role in growth control. This Ctenopharyngodon idella (Grass carp) protein is Somatotropin (gh).